A 626-amino-acid polypeptide reads, in one-letter code: DNA primase (626 aa).

The segment at 39–63 adopts a CHC2-type zinc-finger fold; it reads CPFHGEKTPSFSVSPEKQIFHCFGC. In terms of domain architecture, Toprim spans 264–346; sequence EEITLMEGFM…DVFVLQLPAG (83 aa). Mg(2+) contacts are provided by E270, D314, and D316.

This sequence belongs to the DnaG primase family. Monomer. Interacts with DnaB. Requires Zn(2+) as cofactor. Mg(2+) is required as a cofactor.

The catalysed reaction is ssDNA + n NTP = ssDNA/pppN(pN)n-1 hybrid + (n-1) diphosphate.. Functionally, RNA polymerase that catalyzes the synthesis of short RNA molecules used as primers for DNA polymerase during DNA replication. The protein is DNA primase of Listeria monocytogenes serovar 1/2a (strain ATCC BAA-679 / EGD-e).